We begin with the raw amino-acid sequence, 1043 residues long: Non-canonical nonribosomal peptide synthetase cpsA (1043 aa).

The tract at residues arginine 41 to tyrosine 386 is adenylation (A) domain. Residues glutamine 549–glycine 626 form the Carrier domain. Serine 586 bears the O-(pantetheine 4'-phosphoryl)serine mark. A short-chain dehydrogenase/reductase (R) domain region spans residues methionine 671–alanine 914. The Thioester reductase (TE) domain occupies threonine 672–isoleucine 915.

The protein belongs to the NRP synthetase family. Requires pantetheine 4'-phosphate as cofactor.

It carries out the reaction L-valine + ATP + NADPH + H(+) = L-valinal + AMP + diphosphate + NADP(+). The enzyme catalyses L-tryptophan + ATP + NADPH + H(+) = L-tryptophanal + AMP + diphosphate + NADP(+). Its pathway is alkaloid biosynthesis. Functionally, non-canonical nonribosomal peptide synthetase; part of the gene cluster that mediates the biosynthesis of campesine G, a dimeric indole piperazine alkaloid that shows good insecticidal activity Galleria mellonella. CpsA catalyzes the first steps of the pathway by producing L-tryptophanal and L-valinal from their respective amino-acids. These products condensate spontaneously to form trypyl-valyl pyrazine also known as didehydrocampesine A. The NmrA-like family domain-containing oxidoreductase cpsB is the next enzyme in cps pathway and reduces the unstable didehydrocampesine A to campesine A. The methyltransferase cpsF and the acetyltransferase cpsE both recognize N13 of piperazine ring to carry out methylation and acetylation of campesine A to produce campesine C and B, respectively. The cytochrome P450 monooxygenase cpsD then acts as a dimerase that catalyzes oxidative heterocoupling between campesine B and C to produce heterodimers with unexpected 6/5/6/6/6/6/5/6 eight-ring scaffold called campesine D. Finally,the cytochrome P450 monooxygenase cpsC is a regioselective dehydrogenase that catalyzes dehydrogenation reaction towards C2-N1 to produce campesine G. The sequence is that of Non-canonical nonribosomal peptide synthetase cpsA from Aspergillus campestris (strain IBT 28561).